We begin with the raw amino-acid sequence, 845 residues long: Protein SPA1-RELATED 3 (845 aa).

Residues 1-19 (MEGSSNSNSRGFNTSGVSD) show a composition bias toward polar residues. 2 disordered regions span residues 1-33 (MEGS…LTTR) and 139-158 (CSDS…KEIG). The Protein kinase domain maps to 1–297 (MEGSSNSNSR…MSDLLQSEFI (297 aa)). Residues 301–329 (RDNLEEREAAIELRDRIEEQESLLEFLLL) are a coiled coil. 7 WD repeats span residues 532–571 (NSSN…NDNR), 581–621 (AGRS…LVTE), 624–664 (EHKK…SIGT), 666–706 (KTKA…IPLC), 710–748 (GHSK…SGIN), 757–796 (GHTN…PVMS), and 812–845 (DASQ…EMMT). The DWD box motif lies at 685–699 (AFGSADHKVYYYDLR).

In terms of assembly, interacts with COP1 and CO.

The protein resides in the nucleus. In terms of biological role, repressor of photomorphogenesis in the light. Probably part of the COP1/SPA E3 ubiquitin-protein ligase complex. This is Protein SPA1-RELATED 3 (SPA3) from Arabidopsis thaliana (Mouse-ear cress).